The chain runs to 31 residues: Phallacidin proprotein 1 (31 aa).

A propeptide spanning residues 1–10 (MSDINATRLP) is cleaved from the precursor. The segment at residues 11 to 17 (AWLVDCP) is a cross-link (cyclopeptide (Ala-Pro)). The 2'-cysteinyl-6'-hydroxytryptophan sulfoxide (Trp-Cys) cross-link spans 12 to 16 (WLVDC). A propeptide spanning residues 18-31 (CVGDDVNRLLTRGE) is cleaved from the precursor.

It belongs to the MSDIN fungal toxin family. Post-translationally, processed by the macrocyclase-peptidase enzyme POPB to yield a toxic cyclic heptapeptide. POPB first removes 10 residues from the N-terminus. Conformational trapping of the remaining peptide forces the enzyme to release this intermediate rather than proceed to macrocyclization. The enzyme rebinds the remaining peptide in a different conformation and catalyzes macrocyclization of the N-terminal 7 residues.

Its function is as follows. Major toxin that belongs to the bicyclic heptapeptides called phallotoxins. Although structurally related to amatoxins, phallotoxins have a different mode of action, which is the stabilization of F-actin. Phallotoxins are poisonous when administered parenterally, but not orally because of poor absorption. This is Phallacidin proprotein 1 (PHA1_2) from Amanita bisporigera (Destroying angel).